An 88-amino-acid chain; its full sequence is UPF0367 protein syc2447_c (88 aa).

It belongs to the UPF0367 family.

The polypeptide is UPF0367 protein syc2447_c (Synechococcus sp. (strain ATCC 27144 / PCC 6301 / SAUG 1402/1) (Anacystis nidulans)).